Here is an 88-residue protein sequence, read N- to C-terminus: Probable small nuclear ribonucleoprotein F (88 aa).

One can recognise a Sm domain in the interval 7–79; that stretch reads NPKPFLNNLT…VLYVRGVPED (73 aa).

Belongs to the snRNP Sm proteins family. SmF/LSm6 subfamily.

It localises to the nucleus. Probable common Sm protein, is found in U1 and U2 snRNPs and may be part of the spliceosome. The chain is Probable small nuclear ribonucleoprotein F from Arabidopsis thaliana (Mouse-ear cress).